The sequence spans 195 residues: Guanylate kinase (195 aa).

Residues 7 to 186 form the Guanylate kinase-like domain; that stretch reads GVLLVLSSPS…SVEEISSILD (180 aa). 14 to 21 contacts ATP; the sequence is SPSGAGKT.

It belongs to the guanylate kinase family.

It is found in the cytoplasm. The catalysed reaction is GMP + ATP = GDP + ADP. Essential for recycling GMP and indirectly, cGMP. The sequence is that of Guanylate kinase from Wolbachia sp. subsp. Brugia malayi (strain TRS).